Reading from the N-terminus, the 738-residue chain is Flagellar radial spoke protein 2 (738 aa).

Arginine 104 carries the post-translational modification Asymmetric dimethylarginine. Composition is skewed to acidic residues over residues 134–153 (PDWV…EDEA) and 161–182 (EGEE…DGEG). The interval 134-189 (PDWVAPEDDEAAAVETEDEAAGGAALAEGEEPPPEPEPEPEAAPEDGEGDAPAPKI) is disordered. The residue at position 260 (arginine 260) is an Asymmetric dimethylarginine. The segment at 357–426 (AAAEAAAAAP…PPKPKKKKKV (70 aa)) is disordered. Residues 371–415 (EGEEGEGEAPPAEEEPPAEEEAEEEEEEAEEGAEEGAEEGEEGEE) are compositionally biased toward acidic residues. Arginine 453, arginine 538, and arginine 615 each carry asymmetric dimethylarginine. Positions 674-738 (AEAGEGEAVA…SSEESKAAAE (65 aa)) are disordered. Over residues 689–730 (PAEAEAAPAEGEAAPPAEGEGEAQPAQEGSNSSSSSSDSSSS) the composition is skewed to low complexity.

This sequence belongs to the dpy-30 family. In terms of processing, asymmetrically dimethylated at Arg-104, Arg-260, Arg-453, Arg-538 and Arg-615 during flagellum resorption. Probably methylated by PRMT1.

The protein localises to the cytoplasm. It is found in the cytoskeleton. It localises to the flagellum axoneme. Flagellar radial spokes contribute to the regulation of dynein arm activity and thus the pattern of flagellar bending. They consist of a thin stalk, which is attached to the a subfiber of the outer doublet microtubule, and a bulbous head, which is attached to the stalk and appears to interact with the projections from the central pair of microtubules. Binds calmodulin in a calcium-dependent manner. The polypeptide is Flagellar radial spoke protein 2 (Chlamydomonas reinhardtii (Chlamydomonas smithii)).